The following is a 301-amino-acid chain: tRNA dimethylallyltransferase 2 (301 aa).

11 to 18 is an ATP binding site; it reads GATASGKT. 13–18 contributes to the substrate binding site; sequence TASGKT. Residues 36 to 39 form an interaction with substrate tRNA region; sequence DSRQ.

The protein belongs to the IPP transferase family. In terms of assembly, monomer. It depends on Mg(2+) as a cofactor.

It catalyses the reaction adenosine(37) in tRNA + dimethylallyl diphosphate = N(6)-dimethylallyladenosine(37) in tRNA + diphosphate. Its function is as follows. Catalyzes the transfer of a dimethylallyl group onto the adenine at position 37 in tRNAs that read codons beginning with uridine, leading to the formation of N6-(dimethylallyl)adenosine (i(6)A). In Shewanella sediminis (strain HAW-EB3), this protein is tRNA dimethylallyltransferase 2.